The primary structure comprises 169 residues: Ribosome maturation factor RimM (169 aa).

A PRC barrel domain is found at 94 to 168 (DDEFYHADLI…RIVADPPEGL (75 aa)).

It belongs to the RimM family. In terms of assembly, binds ribosomal protein uS19.

It is found in the cytoplasm. An accessory protein needed during the final step in the assembly of 30S ribosomal subunit, possibly for assembly of the head region. Essential for efficient processing of 16S rRNA. May be needed both before and after RbfA during the maturation of 16S rRNA. It has affinity for free ribosomal 30S subunits but not for 70S ribosomes. The protein is Ribosome maturation factor RimM of Cereibacter sphaeroides (strain ATCC 17023 / DSM 158 / JCM 6121 / CCUG 31486 / LMG 2827 / NBRC 12203 / NCIMB 8253 / ATH 2.4.1.) (Rhodobacter sphaeroides).